A 453-amino-acid polypeptide reads, in one-letter code: Protein FAM222A (453 aa).

Belongs to the FAM222 family.

The chain is Protein FAM222A (Fam222a) from Mus musculus (Mouse).